A 991-amino-acid polypeptide reads, in one-letter code: Seizure protein 6 (991 aa).

The first 19 residues, 1–19 (MRPAALLLLPSLLALLAHG), serve as a signal peptide directing secretion. At 20-922 (LSSEAPITGE…AASSALDAAH (903 aa)) the chain is on the extracellular side. Residues 79-193 (EGLEREEAPQ…QEGPGDMDRP (115 aa)) are disordered. Residues 119-132 (TSPTPAVAAAPTQP) show a composition bias toward low complexity. Residues 175-184 (PPSQAWTPTQ) show a composition bias toward polar residues. Residues Cys-241 and Cys-268 are joined by a disulfide bond. Positions 241–353 (CSWNFSGPEG…HFRYQAYLLS (113 aa)) constitute a CUB 1 domain. N-linked (GlcNAc...) asparagine glycosylation is present at Asn-286. Residues 352–411 (LSCHFPRRPAYGDVTVTSLHPGGSAHFHCATGYQLKGARFLTCLNATQPFWDSQEPVCIA) enclose the Sushi 1 domain. 12 disulfide bridges follow: Cys-354–Cys-394, Cys-380–Cys-409, Cys-413–Cys-440, Cys-529–Cys-571, Cys-556–Cys-586, Cys-590–Cys-616, Cys-707–Cys-749, Cys-735–Cys-762, Cys-768–Cys-810, Cys-796–Cys-827, Cys-835–Cys-877, and Cys-863–Cys-892. N-linked (GlcNAc...) asparagine glycosylation is found at Asn-396, Asn-433, and Asn-538. Residues 413–524 (CGGVIRNATT…AGMALRYEAF (112 aa)) enclose the CUB 2 domain. The Sushi 2 domain maps to 527 to 588 (GHCYEPFVKY…WNETEPACRA (62 aa)). The CUB 3 domain maps to 590–701 (CSGEITDSAG…QGFVIHFFEV (112 aa)). Sushi domains lie at 705-764 (DTCP…SCQR), 766-829 (TSCH…KCLL), and 833-894 (KPCH…ICRA). A helical transmembrane segment spans residues 923–943 (LAAAIFLPLVAMVLLVGGVYL). The Cytoplasmic segment spans residues 944-991 (YFSRFQGKSPLQLPRTHPRPYNRITVESAFDNPTYETGSLSFAGDERI).

The protein belongs to the SEZ6 family. Post-translationally, glycosylated. As to expression, brain-specific. Expressed in extrasynaptic and synaptic subcellular fractions (at protein level). Expression correlates with the most active periods of cortical neurogenesis and neuronal maturation. Expression is restricted to the gray matter with higher levels in the forebrain including the olfactory bulb, anterior olfactory nuclei, olfactory tubercle, striatum, hippocampal CA1 pyramidal cell layer and cerebral cortex. Expression is up-regulated with the convulsant drug, pentylenetetrazole.

The protein resides in the cell membrane. The protein localises to the cell projection. It localises to the dendrite. It is found in the synapse. Its subcellular location is the secreted. The protein resides in the cytoplasm. May play a role in cell-cell recognition and in neuronal membrane signaling. Seems to be important for the achievement of the necessary balance between dendrite elongation and branching during the elaboration of a complex dendritic arbor. Involved in the development of appropriate excitatory synaptic connectivity. This is Seizure protein 6 (Sez6) from Mus musculus (Mouse).